We begin with the raw amino-acid sequence, 302 residues long: MAATQELLLQLQKDNRDGRQRKQELEKLMRGLEAESESLNQRLQDLSERERSLLRRRSQAAQPLQGEAREAARERAERVRRRLEEAERHKEYLEQHSRQLQEQWEELSSQLFYYGGELQSQKSTEQQLAAQLVTLQNELELAETKCALQEEKLQQDALQTAEAWAIFQEQTVVLQEVQVKVMEAAEELDAWQSGRELCDGQLRGVQYSTESLMEEMARADRETRLFGGPRALAIRRCVLGALQVLLTLPLLFLGLSLLWTVLLDPGAVSAWLWSLTSETTLRRLRYTLSPLLELRANGLLPT.

Disordered regions lie at residues 1-21 and 54-73; these read MAAT…GRQR and LRRR…EAAR. Residues 5–160 are a coiled coil; that stretch reads QELLLQLQKD…EKLQQDALQT (156 aa). Residues 238 to 258 traverse the membrane as a helical segment; the sequence is VLGALQVLLTLPLLFLGLSLL.

It belongs to the TMEM191 family.

It is found in the membrane. This Homo sapiens (Human) protein is Transmembrane protein 191C.